A 202-amino-acid polypeptide reads, in one-letter code: MMIIVMLLLSYLIGAFPSGFVIGKLFFKKDIRQFGSGNTGATNSFRVLGRPAGFLVTFLDIFKGFITVFFPLWLPVHADGPISTFFTNGLIVGLFAILGHVYPVYLKFQGGKAVATSAGVVLGVNPILLLILAIIFFIVLKIFKYVSLASIVAAICCVIGSLIIQDYILLVVSFLVSIILIIRHRSNIARIFRGEEPKIKWM.

A run of 6 helical transmembrane segments spans residues 2–22, 54–74, 85–105, 120–140, 141–161, and 162–182; these read MIIVMLLLSYLIGAFPSGFVI, FLVTFLDIFKGFITVFFPLWL, FFTNGLIVGLFAILGHVYPVY, VVLGVNPILLLILAIIFFIVL, KIFKYVSLASIVAAICCVIGS, and LIIQDYILLVVSFLVSIILII.

It belongs to the PlsY family. Probably interacts with PlsX.

The protein resides in the cell membrane. It catalyses the reaction an acyl phosphate + sn-glycerol 3-phosphate = a 1-acyl-sn-glycero-3-phosphate + phosphate. It functions in the pathway lipid metabolism; phospholipid metabolism. In terms of biological role, catalyzes the transfer of an acyl group from acyl-phosphate (acyl-PO(4)) to glycerol-3-phosphate (G3P) to form lysophosphatidic acid (LPA). This enzyme utilizes acyl-phosphate as fatty acyl donor, but not acyl-CoA or acyl-ACP. The protein is Glycerol-3-phosphate acyltransferase of Staphylococcus aureus (strain Mu3 / ATCC 700698).